We begin with the raw amino-acid sequence, 503 residues long: Zinc finger protein JACKDAW (503 aa).

The segment covering 32-51 (IPDLNPNSNPNPNAKPNSSS) has biased composition (low complexity). Positions 32-68 (IPDLNPNSNPNPNAKPNSSSAKKKRNQPGTPDPDADV) are disordered. Serine 72 carries the phosphoserine modification. 2 C2H2-type zinc fingers span residues 82 to 104 (FVCEICNKGFQRDQNLQLHRRGH) and 124 to 154 (YICPIKTCVHHDASRALGDLTGIKKHYSRKH). 2 consecutive short sequence motifs (nuclear localization signal) follow at residues 100 to 107 (HRRGHNLP) and 146 to 153 (IKKHYSRK). The C2H2-type 2; degenerate zinc finger occupies 159-182 (WKCEKCSKKYAVQSDWKAHAKTCG). Zn(2+) contacts are provided by cysteine 161, cysteine 164, histidine 177, cysteine 181, cysteine 188, cysteine 190, histidine 203, and cysteine 207. The CCHC-type 2; atypical zinc finger occupies 186 to 209 (YKCDCGTLFSRKDSFITHRAFCDA). Positions 196 to 208 (RKDSFITHRAFCD) are SHR-binding. Disordered stretches follow at residues 301–417 (SSSS…SSPM) and 432–465 (RENHNRAPPPLSGVSTSSVDNNPFQSNRSGLNPA). The span at 319–358 (TSTNPSLTLSSSSTSQQTSASLQHQTLKDSSFSPLFSSSS) shows a compositional bias: low complexity. Residues 381–392 (MGSTRSNSSTAP) are compositionally biased toward polar residues. Residues 396–407 (AGPTMTSSSATA) show a composition bias toward low complexity. Residues 444–465 (GVSTSSVDNNPFQSNRSGLNPA) are compositionally biased toward polar residues.

Interacts with SHR, SCR, MGP and itself. The heterodimer with SHR involves its zinc fingers. Interacts with SIEL. Binds to RGA and SCL3 competitively in the nucleus. In terms of tissue distribution, expressed in the quiescent center, the ground tissue stem cells and to a lesser extent in mature cortex and endodermis cells.

Its subcellular location is the nucleus. Its function is as follows. Transcription factor that, together with BIB, regulates tissue boundaries and asymmetric cell division by a rapid up-regulation of 'SCARECROW' (SCR), thus controlling the nuclear localization of 'SHORT-ROOT' (SHR) and restricting its action. Binds DNA via its zinc fingers. Recognizes and binds to SCL3 promoter sequence 5'-AGACAA-3' to promote its expression when in complex with RGA. Confines CYCD6 expression to the cortex-endodermis initial/daughter (CEI/CEID) tissues. Required for radial patterning and stem cell maintenance. Counteracted by 'MAGPIE' (MGP). Binds to the SCR and MGP promoter sequences. Controls position-dependent signals that regulate epidermal-cell-type patterning. The chain is Zinc finger protein JACKDAW from Arabidopsis thaliana (Mouse-ear cress).